The sequence spans 462 residues: CCA-adding enzyme (462 aa).

Positions 54 and 57 each coordinate ATP. CTP contacts are provided by S54 and R57. Residues D66, D68, and D117 each contribute to the Mg(2+) site. 3 residues coordinate ATP: H140, K160, and Y169. CTP-binding residues include H140, K160, and Y169.

The protein belongs to the tRNA nucleotidyltransferase/poly(A) polymerase family. Archaeal CCA-adding enzyme subfamily. Homodimer. Mg(2+) serves as cofactor.

The enzyme catalyses a tRNA precursor + 2 CTP + ATP = a tRNA with a 3' CCA end + 3 diphosphate. It catalyses the reaction a tRNA with a 3' CCA end + 2 CTP + ATP = a tRNA with a 3' CCACCA end + 3 diphosphate. Catalyzes the addition and repair of the essential 3'-terminal CCA sequence in tRNAs without using a nucleic acid template. Adds these three nucleotides in the order of C, C, and A to the tRNA nucleotide-73, using CTP and ATP as substrates and producing inorganic pyrophosphate. tRNA 3'-terminal CCA addition is required both for tRNA processing and repair. Also involved in tRNA surveillance by mediating tandem CCA addition to generate a CCACCA at the 3' terminus of unstable tRNAs. While stable tRNAs receive only 3'-terminal CCA, unstable tRNAs are marked with CCACCA and rapidly degraded. The polypeptide is CCA-adding enzyme (Halorubrum lacusprofundi (strain ATCC 49239 / DSM 5036 / JCM 8891 / ACAM 34)).